The chain runs to 152 residues: Globin-1 subunit beta (152 aa).

Ser-2 bears the N-acetylserine mark. Residues 12–152 (VSNADQKDLL…SLVAVVQAAL (141 aa)) form the Globin domain. Residues His-72 and His-104 each coordinate heme b.

It belongs to the globin family. As to quaternary structure, heterotetramer of two alpha chains and two beta chains.

The chain is Globin-1 subunit beta from Anadara trapezia (Sydney cockle).